Here is a 378-residue protein sequence, read N- to C-terminus: Erythronate-4-phosphate dehydrogenase (378 aa).

Positions 45 and 66 each coordinate substrate. Asp146 and Thr175 together coordinate NAD(+). Arg208 is an active-site residue. Residue Asp232 coordinates NAD(+). Glu237 is an active-site residue. His254 serves as the catalytic Proton donor. Gly257 lines the NAD(+) pocket. Tyr258 lines the substrate pocket.

Belongs to the D-isomer specific 2-hydroxyacid dehydrogenase family. PdxB subfamily. In terms of assembly, homodimer.

It localises to the cytoplasm. The catalysed reaction is 4-phospho-D-erythronate + NAD(+) = (R)-3-hydroxy-2-oxo-4-phosphooxybutanoate + NADH + H(+). Its pathway is cofactor biosynthesis; pyridoxine 5'-phosphate biosynthesis; pyridoxine 5'-phosphate from D-erythrose 4-phosphate: step 2/5. Its function is as follows. Catalyzes the oxidation of erythronate-4-phosphate to 3-hydroxy-2-oxo-4-phosphonooxybutanoate. The sequence is that of Erythronate-4-phosphate dehydrogenase from Escherichia coli O8 (strain IAI1).